We begin with the raw amino-acid sequence, 599 residues long: Putative sensor histidine kinase NtrY-like (599 aa).

The next 4 membrane-spanning stretches (helical) occupy residues 17 to 37 (VLIF…FYVI), 44 to 64 (FSTI…LGVL), 85 to 105 (IVIA…VFSV), and 285 to 305 (IMFI…GVIF). Residues 307–361 (AKIVKPIKKLVTATDKVKDGDLTVQVPENEVDKDEIGTLYAAFNRMIKQLSRQQR) form the HAMP domain. Residues 378 to 589 (KVAHEIKNPL…IIDIKFDLKK (212 aa)) form the Histidine kinase domain. Histidine 381 carries the post-translational modification Phosphohistidine; by autocatalysis.

Its subcellular location is the cell membrane. The catalysed reaction is ATP + protein L-histidine = ADP + protein N-phospho-L-histidine.. Its function is as follows. Member of the two-component regulatory system RF_0427/RF_0895. The polypeptide is Putative sensor histidine kinase NtrY-like (Rickettsia felis (strain ATCC VR-1525 / URRWXCal2) (Rickettsia azadi)).